The sequence spans 357 residues: Major outer membrane protein P.IB (357 aa).

The first 19 residues, methionine 1–alanine 19, serve as a signal peptide directing secretion.

The protein belongs to the Gram-negative porin family. As to quaternary structure, homotrimer.

Its subcellular location is the cell outer membrane. Serves as a slightly cation selective porin. In Neisseria sicca, this protein is Major outer membrane protein P.IB (por).